We begin with the raw amino-acid sequence, 105 residues long: uncharacterized protein (105 aa).

Belongs to the asfivirus C122R family.

It localises to the virion. This is an uncharacterized protein from African swine fever virus (strain Badajoz 1971 Vero-adapted) (Ba71V).